We begin with the raw amino-acid sequence, 495 residues long: Ribosomal protein uS12 methylthiotransferase RimO (495 aa).

The MTTase N-terminal domain maps to 5–121; sequence RTVALVTLGC…ISDRLQTILN (117 aa). The [4Fe-4S] cluster site is built by Cys14, Cys50, and Cys84. Residues 145–183 form a disordered region; it reads QSAGADVALPGHGAPEGLPEDLPEGLAPESGPRAPLRRR. The 232-residue stretch at 184–415 folds into the Radical SAM core domain; sequence LDGSPVASVK…RLAEELVAQR (232 aa). Residues Cys198, Cys202, and Cys205 each contribute to the [4Fe-4S] cluster site. One can recognise a TRAM domain in the interval 417–484; it reads EERVGETVHV…GVDLVAEPLP (68 aa).

This sequence belongs to the methylthiotransferase family. RimO subfamily. [4Fe-4S] cluster serves as cofactor.

The protein localises to the cytoplasm. It catalyses the reaction L-aspartate(89)-[ribosomal protein uS12]-hydrogen + (sulfur carrier)-SH + AH2 + 2 S-adenosyl-L-methionine = 3-methylsulfanyl-L-aspartate(89)-[ribosomal protein uS12]-hydrogen + (sulfur carrier)-H + 5'-deoxyadenosine + L-methionine + A + S-adenosyl-L-homocysteine + 2 H(+). Catalyzes the methylthiolation of an aspartic acid residue of ribosomal protein uS12. This is Ribosomal protein uS12 methylthiotransferase RimO from Streptomyces avermitilis (strain ATCC 31267 / DSM 46492 / JCM 5070 / NBRC 14893 / NCIMB 12804 / NRRL 8165 / MA-4680).